Reading from the N-terminus, the 458-residue chain is Argininosuccinate lyase (458 aa).

The protein belongs to the lyase 1 family. Argininosuccinate lyase subfamily.

It localises to the cytoplasm. It carries out the reaction 2-(N(omega)-L-arginino)succinate = fumarate + L-arginine. It participates in amino-acid biosynthesis; L-arginine biosynthesis; L-arginine from L-ornithine and carbamoyl phosphate: step 3/3. The polypeptide is Argininosuccinate lyase (Salmonella typhimurium (strain LT2 / SGSC1412 / ATCC 700720)).